The sequence spans 279 residues: Large ribosomal subunit protein uL2 (279 aa).

Residues 223 to 279 (MAMNPVDHPMGGGEGKSKSGGGRKHPKSPWGQLAKGLKTRNKKKASTKLIVRGRKAK) are disordered. A compositionally biased stretch (gly residues) spans 232-242 (MGGGEGKSKSG). Over residues 259-279 (LKTRNKKKASTKLIVRGRKAK) the composition is skewed to basic residues.

The protein belongs to the universal ribosomal protein uL2 family. As to quaternary structure, part of the 50S ribosomal subunit. Forms a bridge to the 30S subunit in the 70S ribosome.

One of the primary rRNA binding proteins. Required for association of the 30S and 50S subunits to form the 70S ribosome, for tRNA binding and peptide bond formation. It has been suggested to have peptidyltransferase activity; this is somewhat controversial. Makes several contacts with the 16S rRNA in the 70S ribosome. In Chlorobaculum tepidum (strain ATCC 49652 / DSM 12025 / NBRC 103806 / TLS) (Chlorobium tepidum), this protein is Large ribosomal subunit protein uL2.